The primary structure comprises 121 residues: Outer membrane lipoprotein BBA14 (121 aa).

The N-terminal stretch at 1–19 (MQIKNFPFLFLLNSLIIFS) is a signal peptide. Cys-20 carries N-palmitoyl cysteine lipidation. Cys-20 carries the S-diacylglycerol cysteine lipid modification.

Its subcellular location is the cell outer membrane. Functionally, outer membrane lipoprotein that could act as a component of a potential toxin-antitoxin system in B.burgdorferi which could serve as a plasmid stabilization mechanism in a growing bacterial population. The sequence is that of Outer membrane lipoprotein BBA14 from Borreliella burgdorferi (strain ATCC 35210 / DSM 4680 / CIP 102532 / B31) (Borrelia burgdorferi).